The chain runs to 317 residues: Probable pathogenesis-related protein CaO19.6200 (317 aa).

An N-terminal signal peptide occupies residues 1-23 (MKFLQSFPVILAVFSFAANLVSS). 2 disordered regions span residues 52-116 (RLET…TTVT) and 155-179 (PSAP…DSQL). Positions 58–76 (PTSTTTTIVIPSSKPSSPE) are enriched in low complexity. Composition is skewed to polar residues over residues 84–116 (QPMF…TTVT) and 168–179 (ENNSGTNDDSQL). N-linked (GlcNAc...) asparagine glycosylation occurs at asparagine 169. An SCP domain is found at 187–297 (LEAHNIKRAS…GWGLYIICNY (111 aa)).

It belongs to the CRISP family.

It is found in the secreted. Secreted protein that acts as a virulence factor during infections. In Candida albicans (strain SC5314 / ATCC MYA-2876) (Yeast), this protein is Probable pathogenesis-related protein CaO19.6200.